We begin with the raw amino-acid sequence, 233 residues long: Large ribosomal subunit protein uL1 (233 aa).

It belongs to the universal ribosomal protein uL1 family. As to quaternary structure, part of the 50S ribosomal subunit.

Functionally, binds directly to 23S rRNA. The L1 stalk is quite mobile in the ribosome, and is involved in E site tRNA release. Its function is as follows. Protein L1 is also a translational repressor protein, it controls the translation of the L11 operon by binding to its mRNA. The protein is Large ribosomal subunit protein uL1 of Deinococcus deserti (strain DSM 17065 / CIP 109153 / LMG 22923 / VCD115).